A 261-amino-acid polypeptide reads, in one-letter code: Glucosamine-6-phosphate deaminase (261 aa).

The active-site Proton acceptor; for enolization step is D67. Catalysis depends on D136, which acts as the For ring-opening step. H138 functions as the Proton acceptor; for ring-opening step in the catalytic mechanism. The For ring-opening step role is filled by E143.

It belongs to the glucosamine/galactosamine-6-phosphate isomerase family. NagB subfamily.

The enzyme catalyses alpha-D-glucosamine 6-phosphate + H2O = beta-D-fructose 6-phosphate + NH4(+). It participates in amino-sugar metabolism; N-acetylneuraminate degradation; D-fructose 6-phosphate from N-acetylneuraminate: step 5/5. Its function is as follows. Catalyzes the reversible isomerization-deamination of glucosamine 6-phosphate (GlcN6P) to form fructose 6-phosphate (Fru6P) and ammonium ion. This is Glucosamine-6-phosphate deaminase from Beutenbergia cavernae (strain ATCC BAA-8 / DSM 12333 / CCUG 43141 / JCM 11478 / NBRC 16432 / NCIMB 13614 / HKI 0122).